The chain runs to 945 residues: Glutamyl aminopeptidase (945 aa).

The Cytoplasmic portion of the chain corresponds to 1–18 (MNFAEEEPSKKYCIKGKH). Residues 19–39 (VAIICATVVAVGLIVGLSVGL) traverse the membrane as a helical; Signal-anchor for type II membrane protein segment. The Extracellular segment spans residues 40–945 (TRSCEPGTTP…SISEWFTSMP (906 aa)). The tract at residues 45–77 (PGTTPAPSNPPPHTSTALPPQDQNVCPDSDDES) is disordered. Residues Asn116 and Asn189 are each glycosylated (N-linked (GlcNAc...) asparagine). A substrate-binding site is contributed by Glu215. Asn236 and Asn316 each carry an N-linked (GlcNAc...) asparagine glycan. Substrate is bound at residue 349 to 353 (GAMEN). His385 is a Zn(2+) binding site. Glu386 serves as the catalytic Proton acceptor. Residues His389 and Glu408 each coordinate Zn(2+). Residues Asn546, Asn584, Asn601, Asn640, Asn669, Asn754, Asn766, and Asn792 are each glycosylated (N-linked (GlcNAc...) asparagine). Residue Arg878 participates in substrate binding.

This sequence belongs to the peptidase M1 family. In terms of assembly, homodimer; disulfide-linked. Requires Zn(2+) as cofactor. In terms of tissue distribution, highest expression in kidney proximal tubules and ileum enterocytes. High expression also detected in liver and pituitary. Lower levels in heart, adrenal gland and brain. Not detected in aorta, lung or spleen. In heart, higher levels in ventricle than in atrium. Also expressed in glomerular mesangial cells.

It is found in the cell membrane. The catalysed reaction is Release of N-terminal glutamate (and to a lesser extent aspartate) from a peptide.. Its activity is regulated as follows. Substrate specificity is modulated by calcium which enhances the enzymatic activity for cleavage of acidic residues while reducing its activity with basic residues. Inhibited by aminopeptidase inhibitors amastatin and bestatin. Its function is as follows. Regulates central hypertension through its calcium-modulated preference to cleave N-terminal acidic residues from peptides such as angiotensin II. The chain is Glutamyl aminopeptidase (Enpep) from Rattus norvegicus (Rat).